Consider the following 83-residue polypeptide: Hepcidin-2 (83 aa).

An N-terminal signal peptide occupies residues 1–26 (MALSTRTQAACLLLLLLASLSSTTYL). A propeptide spanning residues 27–53 (QQQMRQTTELQPLHGEESRADIAIPMQ) is cleaved from the precursor. 4 disulfide bridges follow: cysteine 65–cysteine 81, cysteine 68–cysteine 71, cysteine 69–cysteine 77, and cysteine 72–cysteine 80.

The protein belongs to the hepcidin family. In terms of tissue distribution, highly expressed in the liver and to a much lesser extent in the heart. Also expressed in pancreas.

Its subcellular location is the secreted. In terms of biological role, seems to act as a signaling molecule involved in the maintenance of iron homeostasis. In Mus musculus (Mouse), this protein is Hepcidin-2 (Hamp2).